The sequence spans 377 residues: Chaperone protein DnaJ (377 aa).

In terms of domain architecture, J spans aspartate 5–glycine 70. The CR-type zinc-finger motif lies at glycine 137 to asparagine 215. Zn(2+) is bound by residues cysteine 150, cysteine 153, cysteine 167, cysteine 170, cysteine 189, cysteine 192, cysteine 203, and cysteine 206. 4 CXXCXGXG motif repeats span residues cysteine 150–glycine 157, cysteine 167–glycine 174, cysteine 189–glycine 196, and cysteine 203–glycine 210.

The protein belongs to the DnaJ family. As to quaternary structure, homodimer. Zn(2+) serves as cofactor.

It is found in the cytoplasm. Participates actively in the response to hyperosmotic and heat shock by preventing the aggregation of stress-denatured proteins and by disaggregating proteins, also in an autonomous, DnaK-independent fashion. Unfolded proteins bind initially to DnaJ; upon interaction with the DnaJ-bound protein, DnaK hydrolyzes its bound ATP, resulting in the formation of a stable complex. GrpE releases ADP from DnaK; ATP binding to DnaK triggers the release of the substrate protein, thus completing the reaction cycle. Several rounds of ATP-dependent interactions between DnaJ, DnaK and GrpE are required for fully efficient folding. Also involved, together with DnaK and GrpE, in the DNA replication of plasmids through activation of initiation proteins. In Bordetella parapertussis (strain 12822 / ATCC BAA-587 / NCTC 13253), this protein is Chaperone protein DnaJ.